Reading from the N-terminus, the 525-residue chain is GMP synthase [glutamine-hydrolyzing] (525 aa).

Residues 9–207 enclose the Glutamine amidotransferase type-1 domain; it reads RILILDFGSQ…VRDICQCEAL (199 aa). The active-site Nucleophile is Cys-86. Catalysis depends on residues His-181 and Glu-183. The GMPS ATP-PPase domain maps to 208-400; sequence WTPAKIIDDA…LGLPYDMLYR (193 aa). 235–241 lines the ATP pocket; the sequence is SGGVDSS.

Homodimer.

The catalysed reaction is XMP + L-glutamine + ATP + H2O = GMP + L-glutamate + AMP + diphosphate + 2 H(+). It participates in purine metabolism; GMP biosynthesis; GMP from XMP (L-Gln route): step 1/1. Functionally, catalyzes the synthesis of GMP from XMP. This chain is GMP synthase [glutamine-hydrolyzing], found in Salmonella typhi.